The following is a 98-amino-acid chain: Integration host factor subunit alpha (98 aa).

The protein belongs to the bacterial histone-like protein family. Heterodimer of an alpha and a beta chain.

This protein is one of the two subunits of integration host factor, a specific DNA-binding protein that functions in genetic recombination as well as in transcriptional and translational control. The chain is Integration host factor subunit alpha from Marinomonas sp. (strain MWYL1).